The primary structure comprises 352 residues: tRNA N6-adenosine threonylcarbamoyltransferase (352 aa).

Positions 114, 118, and 135 each coordinate a divalent metal cation. Substrate is bound by residues 135 to 139 (YVSGG), aspartate 167, glycine 182, glutamate 186, and asparagine 283. Aspartate 311 is a binding site for a divalent metal cation.

This sequence belongs to the KAE1 / TsaD family. As to quaternary structure, component of the EKC/KEOPS complex composed of at least BUD32, CGI121, GON7, KAE1 and PCC1; the whole complex dimerizes. A divalent metal cation serves as cofactor.

The protein localises to the cytoplasm. It is found in the nucleus. The enzyme catalyses L-threonylcarbamoyladenylate + adenosine(37) in tRNA = N(6)-L-threonylcarbamoyladenosine(37) in tRNA + AMP + H(+). In terms of biological role, component of the EKC/KEOPS complex that is required for the formation of a threonylcarbamoyl group on adenosine at position 37 (t(6)A37) in tRNAs that read codons beginning with adenine. The complex is probably involved in the transfer of the threonylcarbamoyl moiety of threonylcarbamoyl-AMP (TC-AMP) to the N6 group of A37. KAE1 likely plays a direct catalytic role in this reaction, but requires other protein(s) of the complex to fulfill this activity. The EKC/KEOPS complex also promotes both telomere uncapping and telomere elongation. The complex is required for efficient recruitment of transcriptional coactivators. In Phaeosphaeria nodorum (strain SN15 / ATCC MYA-4574 / FGSC 10173) (Glume blotch fungus), this protein is tRNA N6-adenosine threonylcarbamoyltransferase.